We begin with the raw amino-acid sequence, 90 residues long: MNKTELIHQVAERTQMSKKDAGEVVNTVFDVIAESLAQGDSVQLIGFGNFEVRERAARKGRNPQTGEEIDIAATKTPAFKAGKQLKDAVK.

Phosphothreonine is present on Thr-4.

This sequence belongs to the bacterial histone-like protein family. In terms of assembly, homodimer.

Histone-like DNA-binding protein which is capable of wrapping DNA to stabilize it, and thus to prevent its denaturation under extreme environmental conditions. This is DNA-binding protein HU-1 (hup2) from Halalkalibacterium halodurans (strain ATCC BAA-125 / DSM 18197 / FERM 7344 / JCM 9153 / C-125) (Bacillus halodurans).